Here is a 454-residue protein sequence, read N- to C-terminus: tRNA modification GTPase MnmE (454 aa).

Arginine 23, glutamate 80, and lysine 120 together coordinate (6S)-5-formyl-5,6,7,8-tetrahydrofolate. The region spanning glycine 216–glycine 377 is the TrmE-type G domain. Asparagine 226 contacts K(+). GTP is bound by residues asparagine 226–serine 231, threonine 245–threonine 251, aspartate 270–glycine 273, asparagine 335–aspartate 338, and serine 358–arginine 360. Serine 230 serves as a coordination point for Mg(2+). The K(+) site is built by threonine 245, isoleucine 247, and threonine 250. Threonine 251 lines the Mg(2+) pocket. Lysine 454 lines the (6S)-5-formyl-5,6,7,8-tetrahydrofolate pocket.

This sequence belongs to the TRAFAC class TrmE-Era-EngA-EngB-Septin-like GTPase superfamily. TrmE GTPase family. Homodimer. Heterotetramer of two MnmE and two MnmG subunits. The cofactor is K(+).

The protein resides in the cytoplasm. In terms of biological role, exhibits a very high intrinsic GTPase hydrolysis rate. Involved in the addition of a carboxymethylaminomethyl (cmnm) group at the wobble position (U34) of certain tRNAs, forming tRNA-cmnm(5)s(2)U34. The protein is tRNA modification GTPase MnmE of Escherichia coli O7:K1 (strain IAI39 / ExPEC).